Reading from the N-terminus, the 293-residue chain is Ribosomal protein L11 methyltransferase (293 aa).

S-adenosyl-L-methionine contacts are provided by T145, G166, D188, and N230.

This sequence belongs to the methyltransferase superfamily. PrmA family.

The protein localises to the cytoplasm. The catalysed reaction is L-lysyl-[protein] + 3 S-adenosyl-L-methionine = N(6),N(6),N(6)-trimethyl-L-lysyl-[protein] + 3 S-adenosyl-L-homocysteine + 3 H(+). Its function is as follows. Methylates ribosomal protein L11. In Enterobacter sp. (strain 638), this protein is Ribosomal protein L11 methyltransferase.